The primary structure comprises 113 residues: Na(+)/H(+) antiporter subunit C (113 aa).

Helical transmembrane passes span 4 to 21 (LMAV…YLLL), 28 to 47 (VIIG…LTMG), and 67 to 89 (PLPQ…FILV).

This sequence belongs to the CPA3 antiporters (TC 2.A.63) subunit C family. In terms of assembly, forms a heterooligomeric complex that consists of seven subunits: MrpA, MrpB, MrpC, MrpD, MrpE, MrpF and MrpG.

It is found in the cell membrane. Functionally, mrp complex is a Na(+)/H(+) antiporter that is considered to be the major Na(+) excretion system in B.subtilis. Has a major role in Na(+) resistance and a minor role in Na(+)- and K(+)-dependent pH homeostasis as compared to TetB. MrpA may be the actual Na(+)/H(+) antiporter, although the six other Mrp proteins are all required for Na(+)/H(+) antiport activity and Na(+) resistance. MrpA is required for initiation of sporulation when external Na(+) concentration increases. Also transports Li(+) but not K(+), Ca(2+) or Mg(2+). In Bacillus subtilis (strain 168), this protein is Na(+)/H(+) antiporter subunit C (mrpC).